Here is a 120-residue protein sequence, read N- to C-terminus: Secreted RxLR effector protein 29 (120 aa).

The N-terminal stretch at 1–21 (MRRTAFIVLSLVALIAPCVTS) is a signal peptide. The short motif at 47 to 64 (RHLRSEANGRLAVVDEEK) is the RxLR-dEER element.

This sequence belongs to the RxLR effector family.

The protein resides in the secreted. It localises to the host cytoplasm. The protein localises to the host nucleus. Functionally, effector that acts as a broad suppressor of cell death to interrupt plant immunity. Inhibits cell death induced by cell death-inducing proteins, including the PAMP elicitor INF1 from P.infestans. This chain is Secreted RxLR effector protein 29, found in Plasmopara viticola (Downy mildew of grapevine).